The primary structure comprises 125 residues: Large ribosomal subunit protein bL21 (125 aa).

The protein belongs to the bacterial ribosomal protein bL21 family. In terms of assembly, part of the 50S ribosomal subunit. Contacts protein L20.

Functionally, this protein binds to 23S rRNA in the presence of protein L20. The protein is Large ribosomal subunit protein bL21 of Synechococcus sp. (strain CC9902).